Here is a 224-residue protein sequence, read N- to C-terminus: COMM domain-containing protein 5 (224 aa).

Ser-2 is modified (N-acetylserine). The COMM domain occupies 151–215; that stretch reads HVADFRWRVD…LVLKEMADLE (65 aa).

This sequence belongs to the COMM domain-containing protein 5 family. As to quaternary structure, component of the commander complex consisting of the CCC subcomplex and the retriever subcomplex. Component of the CCC (COMMD/CCDC22/CCDC93) subcomplex consisting of COMMD1, COMMD2, COMMD3, COMMD4, COMMD5, COMMD6, COMMD7, COMMD8, COMMD9, COMMD10, CCDC22 and CCDC93; within the complex forms a heterodimer with COMMD10. Interacts (via COMM domain) with COMMD1 (via COMM domain). Interacts with RELA, RELB, NFKB1/p105. Interacts with CCDC22, CCDC93, SCNN1B, CUL2, CUL3, CUL4A, CUL4B, CUL7. Highly expressed in heart, stomach, jejunum, kidney, liver, and adrenal gland. Expression was generally higher in adult organs than in fetal tissues, particularly in heart, kidney, and liver.

Its subcellular location is the cytoplasm. The protein resides in the nucleus. Functionally, scaffold protein in the commander complex that is essential for endosomal recycling of transmembrane cargos; the commander complex is composed of the CCC subcomplex and the retriever subcomplex. May modulate activity of cullin-RING E3 ubiquitin ligase (CRL) complexes. Negatively regulates cell proliferation. Negatively regulates cell cycle G2/M phase transition probably by transactivating p21/CDKN1A through the p53/TP53-independent signaling pathway. Involved in kidney proximal tubule morphogenesis. Down-regulates activation of NF-kappa-B. In Homo sapiens (Human), this protein is COMM domain-containing protein 5 (COMMD5).